A 98-amino-acid chain; its full sequence is MAAINRDDVAHLARLAHIEMSAEELDRMAGELAVIVESVKSVSEAAGDDVPATSHPIPLTNVFREDVVGHTFTAEQSLSGAPDAYEGRFKVPAILDED.

Belongs to the GatC family. As to quaternary structure, heterotrimer of A, B and C subunits.

The catalysed reaction is L-glutamyl-tRNA(Gln) + L-glutamine + ATP + H2O = L-glutaminyl-tRNA(Gln) + L-glutamate + ADP + phosphate + H(+). The enzyme catalyses L-aspartyl-tRNA(Asn) + L-glutamine + ATP + H2O = L-asparaginyl-tRNA(Asn) + L-glutamate + ADP + phosphate + 2 H(+). Its function is as follows. Allows the formation of correctly charged Asn-tRNA(Asn) or Gln-tRNA(Gln) through the transamidation of misacylated Asp-tRNA(Asn) or Glu-tRNA(Gln) in organisms which lack either or both of asparaginyl-tRNA or glutaminyl-tRNA synthetases. The reaction takes place in the presence of glutamine and ATP through an activated phospho-Asp-tRNA(Asn) or phospho-Glu-tRNA(Gln). The sequence is that of Aspartyl/glutamyl-tRNA(Asn/Gln) amidotransferase subunit C from Arthrobacter sp. (strain FB24).